Here is a 210-residue protein sequence, read N- to C-terminus: Protein-L-isoaspartate O-methyltransferase (210 aa).

Ser-52 is a catalytic residue.

The protein belongs to the methyltransferase superfamily. L-isoaspartyl/D-aspartyl protein methyltransferase family.

It is found in the cytoplasm. The enzyme catalyses [protein]-L-isoaspartate + S-adenosyl-L-methionine = [protein]-L-isoaspartate alpha-methyl ester + S-adenosyl-L-homocysteine. In terms of biological role, catalyzes the methyl esterification of L-isoaspartyl residues in peptides and proteins that result from spontaneous decomposition of normal L-aspartyl and L-asparaginyl residues. It plays a role in the repair and/or degradation of damaged proteins. This chain is Protein-L-isoaspartate O-methyltransferase, found in Protochlamydia amoebophila (strain UWE25).